Consider the following 292-residue polypeptide: ATP phosphoribosyltransferase (292 aa).

The protein belongs to the ATP phosphoribosyltransferase family. Long subfamily. Requires Mg(2+) as cofactor.

Its subcellular location is the cytoplasm. The enzyme catalyses 1-(5-phospho-beta-D-ribosyl)-ATP + diphosphate = 5-phospho-alpha-D-ribose 1-diphosphate + ATP. The protein operates within amino-acid biosynthesis; L-histidine biosynthesis; L-histidine from 5-phospho-alpha-D-ribose 1-diphosphate: step 1/9. With respect to regulation, feedback inhibited by histidine. Its function is as follows. Catalyzes the condensation of ATP and 5-phosphoribose 1-diphosphate to form N'-(5'-phosphoribosyl)-ATP (PR-ATP). Has a crucial role in the pathway because the rate of histidine biosynthesis seems to be controlled primarily by regulation of HisG enzymatic activity. In Gemmatimonas aurantiaca (strain DSM 14586 / JCM 11422 / NBRC 100505 / T-27), this protein is ATP phosphoribosyltransferase.